The chain runs to 79 residues: Sulfur carrier protein TusA (79 aa).

The Cysteine persulfide intermediate role is filled by C17.

The protein belongs to the sulfur carrier protein TusA family.

The protein localises to the cytoplasm. Its function is as follows. Sulfur carrier protein which probably makes part of a sulfur-relay system. The polypeptide is Sulfur carrier protein TusA (Mannheimia succiniciproducens (strain KCTC 0769BP / MBEL55E)).